The chain runs to 190 residues: ATP-dependent Clp protease proteolytic subunit 2 (190 aa).

S98 functions as the Nucleophile in the catalytic mechanism. Residue H123 is part of the active site.

This sequence belongs to the peptidase S14 family. Fourteen ClpP subunits assemble into 2 heptameric rings which stack back to back to give a disk-like structure with a central cavity, resembling the structure of eukaryotic proteasomes.

Its subcellular location is the cytoplasm. The catalysed reaction is Hydrolysis of proteins to small peptides in the presence of ATP and magnesium. alpha-casein is the usual test substrate. In the absence of ATP, only oligopeptides shorter than five residues are hydrolyzed (such as succinyl-Leu-Tyr-|-NHMec, and Leu-Tyr-Leu-|-Tyr-Trp, in which cleavage of the -Tyr-|-Leu- and -Tyr-|-Trp bonds also occurs).. In terms of biological role, cleaves peptides in various proteins in a process that requires ATP hydrolysis. Has a chymotrypsin-like activity. Plays a major role in the degradation of misfolded proteins. In Bacillus licheniformis (strain ATCC 14580 / DSM 13 / JCM 2505 / CCUG 7422 / NBRC 12200 / NCIMB 9375 / NCTC 10341 / NRRL NRS-1264 / Gibson 46), this protein is ATP-dependent Clp protease proteolytic subunit 2.